The sequence spans 211 residues: Lipoprotein signal peptidase (211 aa).

3 helical membrane passes run 12–32, 96–116, and 127–147; these read LLAL…YLAV, AFRN…ILHY, and LQVA…DRLA. Active-site residues include D153 and D174. A helical transmembrane segment spans residues 167–187; the sequence is WPTFNIADSLIVVGVALLVLH.

This sequence belongs to the peptidase A8 family.

Its subcellular location is the cell inner membrane. The catalysed reaction is Release of signal peptides from bacterial membrane prolipoproteins. Hydrolyzes -Xaa-Yaa-Zaa-|-(S,diacylglyceryl)Cys-, in which Xaa is hydrophobic (preferably Leu), and Yaa (Ala or Ser) and Zaa (Gly or Ala) have small, neutral side chains.. The protein operates within protein modification; lipoprotein biosynthesis (signal peptide cleavage). This protein specifically catalyzes the removal of signal peptides from prolipoproteins. This chain is Lipoprotein signal peptidase, found in Anaeromyxobacter sp. (strain Fw109-5).